The sequence spans 147 residues: Leghemoglobin 3 (147 aa).

The 146-residue stretch at 2–147 (GFTAQQEALV…LATAIKKAMG (146 aa)) folds into the Globin domain. A Nitrated tyrosine modification is found at Tyr30. Ser45 contributes to the heme b binding site. Position 45 is a phosphoserine (Ser45). Residue His61 coordinates O2. Lys64, His93, and Lys96 together coordinate heme b. Tyr135 is subject to Nitrated tyrosine.

It belongs to the plant globin family. In terms of assembly, monomer. In terms of processing, nitrated in effective nodules and particularly in hypoxic conditions; this mechanism may play a protective role in the symbiosis by buffering toxic peroxynitrite NO(2)(-). Nitration level decrease during nodule senescence. Phosphorylation at Ser-45 disrupts the molecular environment of its porphyrin ring oxygen binding pocket, thus leading to a reduced oxygen consumption and to the delivery of oxygen O(2) to symbiosomes. Specifically and strongly expressed in root nodules and at low levels in seedlings.

It is found in the cytoplasm. The protein resides in the cytosol. It localises to the nucleus. Its function is as follows. Leghemoglobin that reversibly binds oxygen O(2) through a pentacoordinated heme iron. In root nodules, facilitates the diffusion of oxygen to the bacteroids while preventing the bacterial nitrogenase from being inactivated by buffering dioxygen, nitric oxide and carbon monoxide, and promoting the formation of reactive oxygen species (ROS, e.g. H(2)O(2)). This role is essential for symbiotic nitrogen fixation (SNF). The protein is Leghemoglobin 3 of Lotus japonicus (Lotus corniculatus var. japonicus).